Here is a 160-residue protein sequence, read N- to C-terminus: Interleukin-36 alpha (160 aa).

The propeptide occupies 1 to 7 (MNKEKEL). Residue Y98 is modified to 3'-nitrotyrosine.

This sequence belongs to the IL-1 family. As to quaternary structure, interacts with TMED10; the interaction mediates the translocation from the cytoplasm into the ERGIC (endoplasmic reticulum-Golgi intermediate compartment) and thereby secretion. Post-translationally, N-terminal truncation leads to a dramatic enhancement of its activity (&gt;1000-fold). In terms of tissue distribution, highly expressed in embryonic tissue and in tissues containing epithelial cells. Elevated expression levels are detected in chronic kidney disease; expressed inepithelia from the distal convoluted tubules (DCTs) to the cortical collecting ducts (CCDs) in single nephrons (at protein level).

The protein localises to the cytoplasm. It localises to the secreted. Its function is as follows. Cytokine that binds to and signals through the IL1RL2/IL-36R receptor which in turn activates NF-kappa-B and MAPK signaling pathways in target cells linked to a pro-inflammatory response. Part of the IL-36 signaling system that is thought to be present in epithelial barriers and to take part in local inflammatory response; similar to the IL-1 system with which it shares the coreceptor IL1RAP. Seems to be involved in skin inflammatory response by acting on keratinocytes, dendritic cells and indirectly on T-cells to drive tissue infiltration, cell maturation and cell proliferation. Induces the production of pro-inflammatory cytokines, including IL-12, Il-1 beta, IL-6, TNF-alpha and IL-23 in bone marrow-derived dendritic cells (BMDCs). Involved in dendritic cell maturation by stimulating the surface expression of CD80, CD86 and MHC class II. Induces the production of IFN-gamma, IL-4 and IL-17 by cultured CD4(+) T-cells and splenocytes. May play a role in pro-inflammatory effects in the lung: induces the expression of CXCL1 and CXCL2 in the lung, and the expression of TNF-alpha, IL-36c, IL-1A, IL-1B, CXCL1 and CXCL2 in isolated splenic CD11c(+) alveolar macrophages. May be involved in T-cell maturation by stimulating the surface expression of CD40 and modestly CD80 and CD86 in splenic CD11c(+) cells. May be involved in CD4(+) T-cell proliferation. Induces NF-kappa B activation in macrophages. This Mus musculus (Mouse) protein is Interleukin-36 alpha.